The primary structure comprises 500 residues: Na(+)/H(+) antiporter NhaB (500 aa).

The next 13 helical transmembrane spans lie at His-11–Leu-31, Leu-34–Phe-54, Met-58–Leu-78, Val-96–Phe-116, Ile-121–Phe-141, Phe-145–Val-165, Leu-205–Pro-225, Phe-241–Val-261, Ile-311–Ile-331, Phe-350–Ile-370, Met-394–Ile-414, Ala-450–Ile-470, and Met-477–Thr-497.

The protein belongs to the NhaB Na(+)/H(+) (TC 2.A.34) antiporter family.

The protein localises to the cell inner membrane. It carries out the reaction 2 Na(+)(in) + 3 H(+)(out) = 2 Na(+)(out) + 3 H(+)(in). Its function is as follows. Na(+)/H(+) antiporter that extrudes sodium in exchange for external protons. The protein is Na(+)/H(+) antiporter NhaB of Pseudomonas putida (strain ATCC 700007 / DSM 6899 / JCM 31910 / BCRC 17059 / LMG 24140 / F1).